Reading from the N-terminus, the 305-residue chain is MSIFFSIRFWPAAISAAILWLPQVLGRSNGTAPNYTVEELWKLETTFWDNFLYPANVEQMEAINSTLFTQDVQGRVDITRVFNGSELNTEYIFGLFSDPDHVSLVGVPVDYSITQFIAQGNIASATTVVTFNATSFGNLLVPVTIDTWIMWDADGRIMQYDATFRWFGFLLDTLVEALAESINGTTSQATASLTQLLATTICATHDQYCTGSNQQYDNNTACLDFLTSAIPLGKDYELGRNTLLCREVHEHMVQYDPALHCPHIGPTGGDYCVDDQTYAQKVLQKYFNQSWIVGVPSTGDIWLGD.

An N-terminal signal peptide occupies residues 1–26; that stretch reads MSIFFSIRFWPAAISAAILWLPQVLG. 8 N-linked (GlcNAc...) asparagine glycosylation sites follow: N29, N34, N64, N83, N132, N183, N218, and N288.

This sequence belongs to the bfoA family.

Its function is as follows. Part of the gene cluster that mediates the biosynthesis of aurasperone B, a dimeric gamma-naphthopyrone. The first step in the biosynthesis of aurasperone B is the production of gamma-naphthopyrone precursor YWA1 by the non-reducing polyketide synthase albA, via condensation of one acetyl-CoA starter unit with 6 malonyl-CoA units. YWA1 is then methylated by aunE at position C-6 to yield foncesin which is further methylated at position C-8 by aunD to produce fonsecin B. A key enzyme in the biosynthetic pathway is the cytochrome P450 monooxygenase aunB which catalyzes the oxidative dimerization of fonsecin B to aurasperone B. AunB also catalyzes the oxidative dimerization of rubrofusarin B into aurasperone A. In Aspergillus niger (strain ATCC MYA-4892 / CBS 513.88 / FGSC A1513), this protein is Aurasperone B biosynthesis cluster protein A.